Consider the following 194-residue polypeptide: Thymidine kinase (194 aa).

ATP is bound by residues 15-22 (GPMFSGKS) and 89-92 (DEAH). Catalysis depends on Glu-90, which acts as the Proton acceptor. Zn(2+) contacts are provided by Cys-146, Cys-149, Cys-178, and Cys-181.

This sequence belongs to the thymidine kinase family. As to quaternary structure, homotetramer.

It localises to the cytoplasm. The catalysed reaction is thymidine + ATP = dTMP + ADP + H(+). This chain is Thymidine kinase, found in Metamycoplasma arthritidis (strain 158L3-1) (Mycoplasma arthritidis).